The chain runs to 613 residues: DNA repair and telomere maintenance protein nbs1 (613 aa).

In terms of domain architecture, FHA spans 23-86 (YIVGRNVSDD…FGTKVNEKVV (64 aa)). BRCT domains follow at residues 107–186 (FTIN…YLST) and 228–302 (GFSC…KIII). The residue at position 355 (Ser-355) is a Phosphoserine. Disordered regions lie at residues 381–428 (KEPE…GQGK) and 546–613 (TEVF…KFHF). Over residues 387 to 399 (LSNQSNNGSAQNK) the composition is skewed to polar residues. Basic and acidic residues predominate over residues 400 to 409 (KSGDNSEKTK). Low complexity predominate over residues 574–592 (SSDKSGKSSISKKSSNSFK). The FxF/Y motif signature appears at 611–613 (FHF).

It belongs to the Nibrin family. In terms of assembly, component of the MRN complex composed of two heterodimers rad32 and rad50 associated with a single nbs1. Interacts with (phosphorylated) ctp1/CtIP. Interacts (via FxF/Y motif) with tel1/atm.

The protein localises to the nucleus. It localises to the chromosome. Its subcellular location is the telomere. Functionally, component of the MRN complex, which plays a central role in double-strand break (DSB) repair, DNA recombination, maintenance of telomere integrity and meiosis. The MRN complex is involved in the repair of DNA double-strand breaks (DSBs) via homologous recombination (HR), an error-free mechanism which primarily occurs during S and G2 phases. The complex (1) mediates the end resection of damaged DNA, which generates proper single-stranded DNA, a key initial steps in HR, and is (2) required for the recruitment of other repair factors and efficient activation of tel1/atm upon DNA damage. The MRN complex possesses single-strand endonuclease activity and double-strand-specific 3'-5' exonuclease activity, which are provided by MRE11, to initiate end resection, which is required for single-strand invasion and recombination. Within the MRN complex, nbs1 acts as a protein-protein adapter, which specifically recognizes and binds phosphorylated proteins, promoting their recruitment to DNA damage sites. Recruits rad32 and rad50 components of the MRN complex to DSBs in response to DNA damage. Promotes the recruitment of tel1/atm to the DNA damage sites, activating tel1/atm function. Mediates the recruitment of phosphorylated ctp1/CtIP to DSBs, leading to cooperation between the MRN complex and ctp1/CtIP to initiate end resection. This is DNA repair and telomere maintenance protein nbs1 from Schizosaccharomyces pombe (strain 972 / ATCC 24843) (Fission yeast).